The sequence spans 119 residues: Promotilin (119 aa).

Residues 1 to 25 (MVSRKAVVVLLVVHAAAMLASHTEA) form the signal peptide. Residues 40–72 (EKERNKGQKKSLSVQQASEELGPLDPSEPTKEE) form a disordered region.

It belongs to the motilin family.

The protein resides in the secreted. Functionally, plays an important role in the regulation of interdigestive gastrointestinal motility and indirectly causes rhythmic contraction of duodenal and colonic smooth muscle. The protein is Promotilin (MLN) of Sus scrofa (Pig).